We begin with the raw amino-acid sequence, 146 residues long: 1,4-dihydroxy-2-naphthoyl-CoA hydrolase (146 aa).

The active site involves Asp-15.

It belongs to the 4-hydroxybenzoyl-CoA thioesterase family. DHNA-CoA hydrolase subfamily.

The enzyme catalyses 1,4-dihydroxy-2-naphthoyl-CoA + H2O = 1,4-dihydroxy-2-naphthoate + CoA + H(+). Its pathway is cofactor biosynthesis; phylloquinone biosynthesis. It functions in the pathway quinol/quinone metabolism; 1,4-dihydroxy-2-naphthoate biosynthesis; 1,4-dihydroxy-2-naphthoate from chorismate: step 7/7. Its function is as follows. Catalyzes the hydrolysis of 1,4-dihydroxy-2-naphthoyl-CoA (DHNA-CoA) to 1,4-dihydroxy-2-naphthoate (DHNA), a reaction involved in phylloquinone (vitamin K1) biosynthesis. The polypeptide is 1,4-dihydroxy-2-naphthoyl-CoA hydrolase (Picosynechococcus sp. (strain ATCC 27264 / PCC 7002 / PR-6) (Agmenellum quadruplicatum)).